Consider the following 117-residue polypeptide: Immunoglobulin heavy variable 1-24 (117 aa).

A signal peptide spans 1-19 (MDCTWRILFLVAAATGTHA). Positions 20–44 (QVQLVQSGAEVKKPGASVKVSCKVS) are framework-1. The 98-residue stretch at 20-117 (QVQLVQSGAE…EDTAVYYCAT (98 aa)) folds into the Ig-like domain. Cysteines 41 and 115 form a disulfide. The complementarity-determining-1 stretch occupies residues 45 to 52 (GYTLTELS). Residues 53 to 69 (MHWVRQAPGKGLEWMGG) form a framework-2 region. Residues 70 to 77 (FDPEDGET) are complementarity-determining-2. The segment at 78-115 (IYAQKFQGRVTMTEDTSTDTAYMELSSLRSEDTAVYYC) is framework-3. A complementarity-determining-3 region spans residues 116 to 117 (AT).

As to quaternary structure, immunoglobulins are composed of two identical heavy chains and two identical light chains; disulfide-linked.

It localises to the secreted. The protein resides in the cell membrane. V region of the variable domain of immunoglobulin heavy chains that participates in the antigen recognition. Immunoglobulins, also known as antibodies, are membrane-bound or secreted glycoproteins produced by B lymphocytes. In the recognition phase of humoral immunity, the membrane-bound immunoglobulins serve as receptors which, upon binding of a specific antigen, trigger the clonal expansion and differentiation of B lymphocytes into immunoglobulins-secreting plasma cells. Secreted immunoglobulins mediate the effector phase of humoral immunity, which results in the elimination of bound antigens. The antigen binding site is formed by the variable domain of one heavy chain, together with that of its associated light chain. Thus, each immunoglobulin has two antigen binding sites with remarkable affinity for a particular antigen. The variable domains are assembled by a process called V-(D)-J rearrangement and can then be subjected to somatic hypermutations which, after exposure to antigen and selection, allow affinity maturation for a particular antigen. This chain is Immunoglobulin heavy variable 1-24, found in Homo sapiens (Human).